An 868-amino-acid polypeptide reads, in one-letter code: DNA mismatch repair protein MutS (868 aa).

620 to 627 provides a ligand contact to ATP; sequence GPNMGGKS.

The protein belongs to the DNA mismatch repair MutS family.

Functionally, this protein is involved in the repair of mismatches in DNA. It is possible that it carries out the mismatch recognition step. This protein has a weak ATPase activity. In Xylella fastidiosa (strain Temecula1 / ATCC 700964), this protein is DNA mismatch repair protein MutS.